The chain runs to 88 residues: Small ribosomal subunit protein bS20 (88 aa).

Belongs to the bacterial ribosomal protein bS20 family.

Binds directly to 16S ribosomal RNA. The polypeptide is Small ribosomal subunit protein bS20 (Chelativorans sp. (strain BNC1)).